The primary structure comprises 72 residues: Translation initiation factor IF-1 (72 aa).

The S1-like domain occupies 1–72; that stretch reads MAKDDVIEIQ…TKGRITYRFK (72 aa).

It belongs to the IF-1 family. As to quaternary structure, component of the 30S ribosomal translation pre-initiation complex which assembles on the 30S ribosome in the order IF-2 and IF-3, IF-1 and N-formylmethionyl-tRNA(fMet); mRNA recruitment can occur at any time during PIC assembly.

It is found in the cytoplasm. Its function is as follows. One of the essential components for the initiation of protein synthesis. Stabilizes the binding of IF-2 and IF-3 on the 30S subunit to which N-formylmethionyl-tRNA(fMet) subsequently binds. Helps modulate mRNA selection, yielding the 30S pre-initiation complex (PIC). Upon addition of the 50S ribosomal subunit IF-1, IF-2 and IF-3 are released leaving the mature 70S translation initiation complex. This is Translation initiation factor IF-1 from Lacticaseibacillus paracasei (strain ATCC 334 / BCRC 17002 / CCUG 31169 / CIP 107868 / KCTC 3260 / NRRL B-441) (Lactobacillus paracasei).